The sequence spans 425 residues: Imidazolonepropionase (425 aa).

Positions 82 and 84 each coordinate Fe(3+). Zn(2+) contacts are provided by H82 and H84. The 4-imidazolone-5-propanoate site is built by R91, Y154, and H187. Position 154 (Y154) interacts with N-formimidoyl-L-glutamate. Residue H253 coordinates Fe(3+). A Zn(2+)-binding site is contributed by H253. E256 is a binding site for 4-imidazolone-5-propanoate. D328 serves as a coordination point for Fe(3+). D328 provides a ligand contact to Zn(2+). The N-formimidoyl-L-glutamate site is built by N330 and G332. S333 lines the 4-imidazolone-5-propanoate pocket.

The protein belongs to the metallo-dependent hydrolases superfamily. HutI family. The cofactor is Zn(2+). Requires Fe(3+) as cofactor.

It localises to the cytoplasm. The catalysed reaction is 4-imidazolone-5-propanoate + H2O = N-formimidoyl-L-glutamate. It functions in the pathway amino-acid degradation; L-histidine degradation into L-glutamate; N-formimidoyl-L-glutamate from L-histidine: step 3/3. Catalyzes the hydrolytic cleavage of the carbon-nitrogen bond in imidazolone-5-propanoate to yield N-formimidoyl-L-glutamate. It is the third step in the universal histidine degradation pathway. The protein is Imidazolonepropionase of Symbiobacterium thermophilum (strain DSM 24528 / JCM 14929 / IAM 14863 / T).